The chain runs to 165 residues: Lipoprotein signal peptidase (165 aa).

3 helical membrane-spanning segments follow: residues 9–29 (PFLW…LAVV), 65–85 (WQKY…LFFL), and 97–119 (TGYA…HGFV). Catalysis depends on residues aspartate 121 and aspartate 139. Residues 134–154 (VFNVADIAICIGAGLLAIDAF) traverse the membrane as a helical segment.

The protein belongs to the peptidase A8 family.

The protein resides in the cell inner membrane. The catalysed reaction is Release of signal peptides from bacterial membrane prolipoproteins. Hydrolyzes -Xaa-Yaa-Zaa-|-(S,diacylglyceryl)Cys-, in which Xaa is hydrophobic (preferably Leu), and Yaa (Ala or Ser) and Zaa (Gly or Ala) have small, neutral side chains.. It participates in protein modification; lipoprotein biosynthesis (signal peptide cleavage). Its function is as follows. This protein specifically catalyzes the removal of signal peptides from prolipoproteins. This chain is Lipoprotein signal peptidase, found in Histophilus somni (strain 2336) (Haemophilus somnus).